A 314-amino-acid polypeptide reads, in one-letter code: Signal peptidase I (314 aa).

A helical transmembrane segment spans residues 5 to 25 (LTIFLLISTLVTGIFWSFYCI). The Cytoplasmic segment spans residues 26 to 63 (KSFKNYLINKKIINNNNFHQEKIEKSKNKTYFLKSLAS). Residues 64–84 (FFPIFLAIFIIRSFIYEPFQI) form a helical membrane-spanning segment. Residues 85 to 314 (PSGSMMPTLL…IRINRIGSIH (230 aa)) are Extracellular-facing. Residues Ser-88 and Lys-143 contribute to the active site.

The protein belongs to the peptidase S26 family.

It is found in the cell membrane. The catalysed reaction is Cleavage of hydrophobic, N-terminal signal or leader sequences from secreted and periplasmic proteins.. The chain is Signal peptidase I (lepB) from Buchnera aphidicola subsp. Acyrthosiphon pisum (strain APS) (Acyrthosiphon pisum symbiotic bacterium).